The following is a 187-amino-acid chain: Large ribosomal subunit protein bL9 (187 aa).

Residues 155–187 (AQRGGMVTGLREEDEEEEVEETATEEGGEETAA) are disordered. The segment covering 166 to 187 (EEDEEEEVEETATEEGGEETAA) has biased composition (acidic residues).

Belongs to the bacterial ribosomal protein bL9 family.

Binds to the 23S rRNA. In Rhodospirillum centenum (strain ATCC 51521 / SW), this protein is Large ribosomal subunit protein bL9.